Consider the following 615-residue polypeptide: Cysteine-rich receptor-like protein kinase 1 (615 aa).

Positions 1-28 are cleaved as a signal peptide; that stretch reads MQICASIAQFLAWVSFLVLLATVGSSSS. 2 Gnk2-homologous domains span residues 29 to 131 and 137 to 237; these read SESL…DRDF and DPTF…THKF. The Extracellular portion of the chain corresponds to 29–266; the sequence is SESLLNCQPL…SFFPHLSDRD (238 aa). N-linked (GlcNAc...) asparagine glycosylation is found at asparagine 100 and asparagine 165. Residues 267–287 form a helical membrane-spanning segment; sequence VTRLAIAAISLSILTSLGAFI. The Cytoplasmic segment spans residues 288–615; that stretch reads SYRRVSRKRK…VLMPDEETRV (328 aa). The Protein kinase domain occupies 318-602; sequence FHDSMKLGQG…FEYPKQPPFL (285 aa). Residues 324–332 and lysine 346 each bind ATP; that span reads LGQGGAGSV. The active-site Proton acceptor is the aspartate 443.

This sequence belongs to the protein kinase superfamily. Ser/Thr protein kinase family. CRK subfamily. In terms of tissue distribution, expressed in the whole plant at low levels.

Its subcellular location is the membrane. The enzyme catalyses L-seryl-[protein] + ATP = O-phospho-L-seryl-[protein] + ADP + H(+). The catalysed reaction is L-threonyl-[protein] + ATP = O-phospho-L-threonyl-[protein] + ADP + H(+). This chain is Cysteine-rich receptor-like protein kinase 1, found in Arabidopsis thaliana (Mouse-ear cress).